Reading from the N-terminus, the 229-residue chain is MKIKAPVITIDGPSGSGKGTVAGLLAKKLGWCLLDSGALYRLLAFAARNHGVDLTNEEALKLLAAHLDVQFETTAAGQGQRIILEGEDVTQAIRNEQIGSGASQVASLPAVRDALLMRQRAFQEEPGLVADGRDMGTVVFPDAPLKVFLTASAEERARRRYLQLKAKGDDVSLSSLLDEICARDERDTQRAVAPLKPAHDAIQLDSTELSIEQVLERILSEIALRDIAG.

12-20 (GPSGSGKGT) contributes to the ATP binding site.

Belongs to the cytidylate kinase family. Type 1 subfamily.

The protein localises to the cytoplasm. The catalysed reaction is CMP + ATP = CDP + ADP. It carries out the reaction dCMP + ATP = dCDP + ADP. The sequence is that of Cytidylate kinase from Pseudomonas syringae pv. tomato (strain ATCC BAA-871 / DC3000).